Reading from the N-terminus, the 194-residue chain is Inner membrane-spanning protein YciB (194 aa).

5 consecutive transmembrane segments (helical) span residues 3 to 23 (LFIE…AGIY), 47 to 67 (IPAK…LTIY), 76 to 96 (WKVT…NTFF), 119 to 139 (LNLA…YIAF), and 149 to 169 (FKVF…ILFL).

Belongs to the YciB family.

It is found in the cell inner membrane. In terms of biological role, plays a role in cell envelope biogenesis, maintenance of cell envelope integrity and membrane homeostasis. The sequence is that of Inner membrane-spanning protein YciB from Colwellia psychrerythraea (strain 34H / ATCC BAA-681) (Vibrio psychroerythus).